We begin with the raw amino-acid sequence, 51 residues long: Nawaprin (51 aa).

The WAP domain maps to 1–50 (NEKSGSCPDMSMPIPPLGICKTLCNSDSGCPNVQKCCKNGCGFMTCTTPV). Disulfide bonds link cysteine 7-cysteine 37, cysteine 20-cysteine 41, cysteine 24-cysteine 36, and cysteine 30-cysteine 46.

As to expression, expressed by the venom gland.

The protein resides in the secreted. Its function is as follows. Damages membranes of susceptible bacteria. Has no hemolytic activity. Not toxic to mice. Does not inhibit the proteinases elastase and cathepsin G. This chain is Nawaprin, found in Naja nigricollis (Black-necked spitting cobra).